Consider the following 95-residue polypeptide: Large ribosomal subunit protein bL25 (95 aa).

It belongs to the bacterial ribosomal protein bL25 family. Part of the 50S ribosomal subunit; part of the 5S rRNA/L5/L18/L25 subcomplex. Contacts the 5S rRNA. Binds to the 5S rRNA independently of L5 and L18.

Its function is as follows. This is one of the proteins that binds to the 5S RNA in the ribosome where it forms part of the central protuberance. This is Large ribosomal subunit protein bL25 from Shewanella sediminis (strain HAW-EB3).